Here is a 90-residue protein sequence, read N- to C-terminus: Essential MCU regulator, mitochondrial (90 aa).

Residues 49-68 traverse the membrane as a helical segment; that stretch reads GVLKLIFVSASSLYIGGLIA.

Belongs to the SMDT1/EMRE family.

Its subcellular location is the mitochondrion inner membrane. Its function is as follows. Essential regulatory subunit of the mitochondrial calcium uniporter (mcu-1) channel, a protein that mediates calcium uptake into mitochondria. This is Essential MCU regulator, mitochondrial from Caenorhabditis elegans.